The chain runs to 327 residues: Eukaryotic translation initiation factor 3 subunit I (327 aa).

WD repeat units follow at residues 8–49, 51–91, 144–183, 188–227, 229–268, and 285–324; these read GHDR…GTYD, HNGV…NSVS, SLQT…DIVN, AHKF…CLKT, KAER…GHFE, and GHFG…LKFD.

Belongs to the eIF-3 subunit I family. As to quaternary structure, component of the eukaryotic translation initiation factor 3 (eIF-3) complex.

It localises to the cytoplasm. Its function is as follows. Component of the eukaryotic translation initiation factor 3 (eIF-3) complex, which is involved in protein synthesis of a specialized repertoire of mRNAs and, together with other initiation factors, stimulates binding of mRNA and methionyl-tRNAi to the 40S ribosome. The eIF-3 complex specifically targets and initiates translation of a subset of mRNAs involved in cell proliferation. The sequence is that of Eukaryotic translation initiation factor 3 subunit I from Brugia malayi (Filarial nematode worm).